The primary structure comprises 478 residues: Glycogen synthase (478 aa).

Lysine 15 is an ADP-alpha-D-glucose binding site.

Belongs to the glycosyltransferase 1 family. Bacterial/plant glycogen synthase subfamily.

It catalyses the reaction [(1-&gt;4)-alpha-D-glucosyl](n) + ADP-alpha-D-glucose = [(1-&gt;4)-alpha-D-glucosyl](n+1) + ADP + H(+). The protein operates within glycan biosynthesis; glycogen biosynthesis. Functionally, synthesizes alpha-1,4-glucan chains using ADP-glucose. In Acholeplasma laidlawii (strain PG-8A), this protein is Glycogen synthase.